We begin with the raw amino-acid sequence, 434 residues long: Prenyltransferase fogH (434 aa).

Glu-86 serves as a coordination point for L-tryptophan. Arg-101, Arg-248, Lys-250, Tyr-252, and Tyr-346 together coordinate substrate.

The protein belongs to the tryptophan dimethylallyltransferase family.

It participates in secondary metabolite biosynthesis. Functionally, prenyltransferase; part of the gene cluster that mediates the biosynthesis of flavoglaucin and congeners (including aspergin, dihydroauroglaucin and auroglaucin), prenylated salicylaldehyde derivatives carrying a saturated or an unsaturated C-7 side chain. The PKS fogA releases the carboxylic acid (8E,10E,12E)-3,5,7-trihydroxytetradeca-8,10,12-trienoic acid as its product, as well as derivatives with one and two double bonds. FogA is indeed able to reduce the initial triketide, thus being at least partially responsible for the differently saturated heptyl side chains of flavoglaucin congeners. The oxidoreductases fogB, fogC and fogD modify the nascent polyketide in fogA-bound form and, together, fogA, fogB, fogC and fogD are necessary for the formation of the aromatic core and the cyclized PKS products are released as salicyl alcohols. In particular, fogB is responsible for oxidation of a hydroxyl group or reduction of remaining double bond(s) at the C-7 residue whereas fogD is probably involved in the reductive release of the modified PKS products. The cytochrome P450 monooxygenase fogE is then responsible for the hydroxylation at C-3 of the benzene ring. The fogE products are substrates of the prenyltransferase fogH and the prenylated benzyl alcohols are subsequently oxidized by the fogF to produce the final aryl aldehydes flavoglaucin and congeners. The short-chain dehydrogenase fogG does not seem to be involved in the biosynthesis of the prenylated salicylaldehyde derivatives. The chain is Prenyltransferase fogH from Aspergillus ruber (strain CBS 135680).